Here is a 439-residue protein sequence, read N- to C-terminus: Iron-sulfur cluster assembly factor IBA57 homolog, mitochondrial (439 aa).

The transit peptide at 1–72 (MQPATRSIAV…RLISVSGPDA (72 aa)) directs the protein to the mitochondrion.

It belongs to the GcvT family. CAF17/IBA57 subfamily.

It is found in the mitochondrion matrix. The sequence is that of Iron-sulfur cluster assembly factor IBA57 homolog, mitochondrial (caf-17) from Neurospora crassa (strain ATCC 24698 / 74-OR23-1A / CBS 708.71 / DSM 1257 / FGSC 987).